A 742-amino-acid chain; its full sequence is Zinc transporter ZIP6 (742 aa).

The Extracellular segment spans residues 1–353 (MMTFLCTRSG…QRNTPVYIAW (353 aa)). 2 N-linked (GlcNAc...) asparagine glycosylation sites follow: asparagine 94 and asparagine 127. Disordered stretches follow at residues 148–182 (PVTT…SQSD) and 191–210 (MNQE…RSRR). The segment covering 152 to 165 (KKGDMDHSVEKSDP) has biased composition (basic and acidic residues). The span at 192-206 (NQESTTALTTPSYVT) shows a compositional bias: polar residues. N-linked (GlcNAc...) asparagine glycosylation is found at asparagine 212, asparagine 232, and asparagine 237. Positions 220–260 (TQDHASFSPSQPNVTHSNHTHHDEDTPTHQHDDHDEHEHAR) are disordered. Over residues 222–236 (DHASFSPSQPNVTHS) the composition is skewed to polar residues. Over residues 239–260 (THHDEDTPTHQHDDHDEHEHAR) the composition is skewed to basic and acidic residues. Asparagine 267 and asparagine 337 each carry an N-linked (GlcNAc...) asparagine glycan. Residues 310–342 (EDEHSDHSHHHKHHHHHHDHQHLQHPHNHTNGR) form a disordered region. Basic residues predominate over residues 316-339 (HSHHHKHHHHHHDHQHLQHPHNHT). A helical membrane pass occupies residues 354–374 (LGGFLSITLISLLALVGVVLI). The Cytoplasmic segment spans residues 375–385 (PLMNRVCFNFL). A helical transmembrane segment spans residues 386-406 (LSFLVALAVGTLSGDALLHLI). Topologically, residues 407 to 430 (PHSQGHHHHGHSEEHAEEEDSLRP) are extracellular. Residues 431-451 (VWTGLTALSGVYIMFLIEHFL) form a helical membrane-spanning segment. At 452 to 644 (TLGKMYKDKN…LKAGMSVRQA (193 aa)) the chain is on the cytoplasmic side. A helical membrane pass occupies residues 645–665 (MLYNLLSALMGYLGMIIGILI). The Extracellular segment spans residues 666–671 (GHYAEN). A helical membrane pass occupies residues 672–692 (VATWIFALTAGLFMYVALVDM). The Cytoplasmic segment spans residues 693–710 (VPEMLHNDASEAGFSHYG). The helical transmembrane segment at 711 to 731 (FFLLQNAGILLGFGIMLIIAV) threads the bilayer. Residues 732-742 (FEDRIQLDLGY) lie on the Extracellular side of the membrane.

The protein belongs to the ZIP transporter (TC 2.A.5) family. Cleaved on the N-terminus before locating to the plasma membrane. In terms of processing, N-glycosylated.

The protein resides in the cell membrane. The enzyme catalyses Zn(2+)(in) = Zn(2+)(out). In terms of biological role, acts as a zinc-influx transporter which plays a role in zinc homeostasis and in the induction of epithelial-to-mesenchymal transition (EMT). This chain is Zinc transporter ZIP6, found in Danio rerio (Zebrafish).